Here is a 939-residue protein sequence, read N- to C-terminus: Progesterone receptor (939 aa).

A compositionally biased stretch (basic and acidic residues) spans M1 to A11. The AF3; mediates transcriptional activation (in isoform B) stretch occupies residues M1–L174. The tract at residues M1–C302 is disordered. The segment at M1–I572 is modulating, Ala/Pro-rich. A Glycyl lysine isopeptide (Lys-Gly) (interchain with G-Cter in SUMO) cross-link involves residue K7. Residues A15–E26 are compositionally biased toward low complexity. Position 20 is a phosphoserine (S20). A compositionally biased stretch (basic and acidic residues) spans P27–R36. Low complexity predominate over residues A49–S67. S141 is subject to Phosphoserine. The mediates transcriptional transrepression (in isoform A) stretch occupies residues M175 to H314. Positions K193–R197 match the Nuclear localization signal motif. S200 is modified (phosphoserine). Low complexity-rich tracts occupy residues G211 to G230 and P257 to V278. S303 bears the Phosphoserine; by MAPK1 mark. Phosphoserine; by MAPK is present on S349. Residue K392 forms a Glycyl lysine isopeptide (Lys-Gly) (interchain with G-Cter in SUMO); alternate linkage. K392 is covalently cross-linked (Glycyl lysine isopeptide (Lys-Gly) (interchain with G-Cter in ubiquitin); alternate). Phosphoserine; by CDK2 is present on S404. Residues P463–R552 form an AF1; mediates transcriptional activation region. K537 is covalently cross-linked (Glycyl lysine isopeptide (Lys-Gly) (interchain with G-Cter in SUMO)). 2 NR C4-type zinc fingers span residues C573–C593 and C609–C633. A DNA-binding region (nuclear receptor) is located at residues C573–F645. Position 682 is a phosphoserine (S682). In terms of domain architecture, NR LBD spans Q685–I919. An AF2; mediates transcriptional activation region spans residues L693–K939.

This sequence belongs to the nuclear hormone receptor family. NR3 subfamily. As to quaternary structure, interacts with SMARD1 and UNC45A. Interacts with CUEDC2; the interaction promotes ubiquitination, decreases sumoylation, and represses transcriptional activity. Interacts with PIAS3; the interaction promotes sumoylation of PR in a hormone-dependent manner, inhibits DNA-binding, and alters nuclear export. Interacts with SP1; the interaction requires ligand-induced phosphorylation on Ser-349 by ERK1/2-MAPK. Interacts with PRMT2. Isoform A interacts with NCOR2. Isoform B (but not isoform A) interacts with NCOA2 and NCOA1. Isoform B (but not isoform A) interacts with KLF9. Interacts with GTF2B. In terms of processing, phosphorylated on multiple serine sites. Several of these sites are hormone-dependent. Phosphorylation on Ser-303 occurs preferentially on isoform B, is highly hormone-dependent and modulates ubiquitination and sumoylation on Lys-392. Phosphorylation on Ser-303 and Ser-349 also requires induction by hormone. Basal phosphorylation on Ser-200 and Ser-404 is increased in response to progesterone and can be phosphorylated in vitro by the CDK2-A1 complex. Increased levels of phosphorylation on Ser-404 also in the presence of EGF, heregulin, IGF, PMA and FBS. Phosphorylation at this site by CDK2 is ligand-independent, and increases nuclear translocation and transcriptional activity. Phosphorylation at Ser-303, but not at Ser-200, is impaired during the G(2)/M phase of the cell cycle. Phosphorylation on Ser-349 by ERK1/2 MAPK is required for interaction with SP1. Sumoylation is hormone-dependent and represses transcriptional activity. Sumoylation on all three sites is enhanced by PIAS3. Desumoylated by SENP1. Sumoylation on Lys-392, the main site of sumoylation, is repressed by ubiquitination on the same site, and modulated by phosphorylation at Ser-303. Post-translationally, ubiquitination is hormone-dependent and represses sumoylation on the same site. Promoted by MAPK-mediated phosphorylation on Ser-303. In terms of processing, palmitoylated by ZDHHC7 and ZDHHC21. Palmitoylation is required for plasma membrane targeting and for rapid intracellular signaling via ERK and AKT kinases and cAMP generation. In terms of tissue distribution, expressed in mammary gland and uterus.

It localises to the nucleus. It is found in the cytoplasm. In terms of biological role, the steroid hormones and their receptors are involved in the regulation of eukaryotic gene expression and affect cellular proliferation and differentiation in target tissues. Depending on the isoform, progesterone receptor functions as a transcriptional activator or repressor. Ligand-dependent transdominant repressor of steroid hormone receptor transcriptional activity including repression of its isoform B, MR and ER. Transrepressional activity may involve recruitment of corepressor NCOR2. Its function is as follows. Transcriptional activator of several progesteron-dependent promoters in a variety of cell types. Involved in activation of SRC-dependent MAPK signaling on hormone stimulation. The protein is Progesterone receptor (PGR) of Canis lupus familiaris (Dog).